The following is a 498-amino-acid chain: ATP synthase subunit beta, chloroplastic (498 aa).

Position 172–179 (172–179 (GGAGVGKT)) interacts with ATP.

This sequence belongs to the ATPase alpha/beta chains family. F-type ATPases have 2 components, CF(1) - the catalytic core - and CF(0) - the membrane proton channel. CF(1) has five subunits: alpha(3), beta(3), gamma(1), delta(1), epsilon(1). CF(0) has four main subunits: a(1), b(1), b'(1) and c(9-12).

It localises to the plastid. It is found in the chloroplast thylakoid membrane. It catalyses the reaction ATP + H2O + 4 H(+)(in) = ADP + phosphate + 5 H(+)(out). Functionally, produces ATP from ADP in the presence of a proton gradient across the membrane. The catalytic sites are hosted primarily by the beta subunits. This chain is ATP synthase subunit beta, chloroplastic, found in Phormium tenax (New Zealand flax).